We begin with the raw amino-acid sequence, 211 residues long: Cytochrome c biogenesis ATP-binding export protein CcmA 2 (211 aa).

The ABC transporter domain maps to 6–208 (LEARELGVRR…GAVLDLATDA (203 aa)). An ATP-binding site is contributed by 38 to 45 (GPNGAGKT).

It belongs to the ABC transporter superfamily. CcmA exporter (TC 3.A.1.107) family. As to quaternary structure, the complex is composed of two ATP-binding proteins (CcmA) and two transmembrane proteins (CcmB).

The protein localises to the cell inner membrane. The enzyme catalyses heme b(in) + ATP + H2O = heme b(out) + ADP + phosphate + H(+). Part of the ABC transporter complex CcmAB involved in the biogenesis of c-type cytochromes; once thought to export heme, this seems not to be the case, but its exact role is uncertain. Responsible for energy coupling to the transport system. The sequence is that of Cytochrome c biogenesis ATP-binding export protein CcmA 2 from Cupriavidus metallidurans (strain ATCC 43123 / DSM 2839 / NBRC 102507 / CH34) (Ralstonia metallidurans).